A 107-amino-acid polypeptide reads, in one-letter code: U1-lycotoxin-Ls1i (107 aa).

The first 20 residues, Met-1–Ser-20, serve as a signal peptide directing secretion. A propeptide spanning residues Glu-21–Arg-41 is cleaved from the precursor. Intrachain disulfides connect Cys-44/Cys-59, Cys-51/Cys-68, Cys-58/Cys-86, and Cys-70/Cys-84.

This sequence belongs to the neurotoxin 19 (CSTX) family. 04 (U1-Lctx) subfamily. As to expression, expressed by the venom gland.

The protein resides in the secreted. The polypeptide is U1-lycotoxin-Ls1i (Lycosa singoriensis (Wolf spider)).